Consider the following 333-residue polypeptide: tRNA-dihydrouridine(16) synthase (333 aa).

FMN is bound by residues 19–21 (PMQ) and Gln80. Residue Cys110 is the Proton donor of the active site. FMN-binding positions include Lys151, 211–213 (NGD), and 235–236 (GR).

It belongs to the Dus family. DusC subfamily. The cofactor is FMN.

It carries out the reaction 5,6-dihydrouridine(16) in tRNA + NADP(+) = uridine(16) in tRNA + NADPH + H(+). The enzyme catalyses 5,6-dihydrouridine(16) in tRNA + NAD(+) = uridine(16) in tRNA + NADH + H(+). Functionally, catalyzes the synthesis of 5,6-dihydrouridine (D), a modified base found in the D-loop of most tRNAs, via the reduction of the C5-C6 double bond in target uridines. Specifically modifies U16 in tRNAs. This is tRNA-dihydrouridine(16) synthase from Neisseria meningitidis serogroup A / serotype 4A (strain DSM 15465 / Z2491).